We begin with the raw amino-acid sequence, 277 residues long: 4-hydroxy-tetrahydrodipicolinate reductase (277 aa).

NAD(+)-binding positions include 10 to 15 (GAGGRM) and E36. R37 contacts NADP(+). Residues 100–102 (GTT) and 124–127 (SGNM) contribute to the NAD(+) site. The active-site Proton donor/acceptor is the H158. H159 contributes to the (S)-2,3,4,5-tetrahydrodipicolinate binding site. The active-site Proton donor is K162. 168–169 (GT) lines the (S)-2,3,4,5-tetrahydrodipicolinate pocket.

This sequence belongs to the DapB family.

Its subcellular location is the cytoplasm. It catalyses the reaction (S)-2,3,4,5-tetrahydrodipicolinate + NAD(+) + H2O = (2S,4S)-4-hydroxy-2,3,4,5-tetrahydrodipicolinate + NADH + H(+). It carries out the reaction (S)-2,3,4,5-tetrahydrodipicolinate + NADP(+) + H2O = (2S,4S)-4-hydroxy-2,3,4,5-tetrahydrodipicolinate + NADPH + H(+). The protein operates within amino-acid biosynthesis; L-lysine biosynthesis via DAP pathway; (S)-tetrahydrodipicolinate from L-aspartate: step 4/4. Catalyzes the conversion of 4-hydroxy-tetrahydrodipicolinate (HTPA) to tetrahydrodipicolinate. This is 4-hydroxy-tetrahydrodipicolinate reductase from Chelativorans sp. (strain BNC1).